We begin with the raw amino-acid sequence, 325 residues long: Probable pectate lyase B (325 aa).

Residues 1–15 (MRLPTLFMLAAIATA) form the signal peptide. Residues Asp-132, Asp-161, and Asp-165 each coordinate Ca(2+). Arg-218 is an active-site residue.

It belongs to the polysaccharide lyase 1 family. The cofactor is Ca(2+).

The protein resides in the secreted. The catalysed reaction is Eliminative cleavage of (1-&gt;4)-alpha-D-galacturonan to give oligosaccharides with 4-deoxy-alpha-D-galact-4-enuronosyl groups at their non-reducing ends.. Pectinolytic enzyme consist of four classes of enzymes: pectin lyase, polygalacturonase, pectin methylesterase and rhamnogalacturonase. Among pectinolytic enzymes, pectin lyase is the most important in depolymerization of pectin, since it cleaves internal glycosidic bonds of highly methylated pectins. Favors pectate, the anion, over pectin, the methyl ester. This is Probable pectate lyase B (plyB) from Aspergillus terreus (strain NIH 2624 / FGSC A1156).